A 113-amino-acid polypeptide reads, in one-letter code: Large ribosomal subunit protein bL17 (113 aa).

This sequence belongs to the bacterial ribosomal protein bL17 family. Part of the 50S ribosomal subunit. Contacts protein L32.

The chain is Large ribosomal subunit protein bL17 from Caldicellulosiruptor bescii (strain ATCC BAA-1888 / DSM 6725 / KCTC 15123 / Z-1320) (Anaerocellum thermophilum).